A 317-amino-acid polypeptide reads, in one-letter code: Transaldolase (317 aa).

Residue lysine 126 is the Schiff-base intermediate with substrate of the active site.

It belongs to the transaldolase family. Type 1 subfamily. As to quaternary structure, homodimer.

It localises to the cytoplasm. The enzyme catalyses D-sedoheptulose 7-phosphate + D-glyceraldehyde 3-phosphate = D-erythrose 4-phosphate + beta-D-fructose 6-phosphate. It functions in the pathway carbohydrate degradation; pentose phosphate pathway; D-glyceraldehyde 3-phosphate and beta-D-fructose 6-phosphate from D-ribose 5-phosphate and D-xylulose 5-phosphate (non-oxidative stage): step 2/3. Functionally, transaldolase is important for the balance of metabolites in the pentose-phosphate pathway. The sequence is that of Transaldolase from Burkholderia orbicola (strain AU 1054).